We begin with the raw amino-acid sequence, 367 residues long: GDSL esterase/lipase At4g28780 (367 aa).

The signal sequence occupies residues 1–28 (MSTFLLTWIIMTVALSVTLFLMPQQTNA). Catalysis depends on S38, which acts as the Nucleophile. An N-linked (GlcNAc...) asparagine glycan is attached at N119. Catalysis depends on residues D328 and H331. A glycan (N-linked (GlcNAc...) asparagine) is linked at N356.

It belongs to the 'GDSL' lipolytic enzyme family.

The protein resides in the secreted. This is GDSL esterase/lipase At4g28780 from Arabidopsis thaliana (Mouse-ear cress).